The chain runs to 543 residues: MAVNSASYSRWCCFADSWQREKLASMESPEEPGASMDENYFVNYTFKDRSHSGRVAQGTMKLCLEEELFADVTISVEGREFQLHRLVLSAQSCFFRSMFTSNLKEAHNRVIVLQDVSESVFQLLVDYIYHGTVKLRAEELQEIYEVSDMYQLTSLFEECSRFLARTVQVGNCLQVMWLADRHSDPELYTAAKHCAKTHLAQLQNTEEFLHLPHHLLTDIISDGVPCSQNPTEAIEAWINFNKEEREAFAESLRTSLKEIGENVHIYLIGKESSRTHSLAVSLHCAEDDSISVSGQNSLCHQITAACKHGGDLYVVGGSIPRRMWKCNNATVDWEWCAPLPRDRLRHTLVSVPGKDAIYSLGGKTLQDTLSNAVIYYRVGDNVWTETTQLEVAVSGAAGANLNGIIYLLGGEENDLDFFTKPSRLIQCFDTETDKCHVKPYVLPFAGHMHAAVHKDLVFIVAEGDSLVCYNPLLDSFTRLCLPEAWSSAPSLWKIASRNGSIYVFRDRYKKGDANTYKLDPATSAVTVTRGIKVLLTNLQFVLA.

Residues 70-137 enclose the BTB domain; the sequence is ADVTISVEGR…IYHGTVKLRA (68 aa). A BACK domain is found at 172–264; that stretch reads CLQVMWLADR…SLKEIGENVH (93 aa). Kelch repeat units lie at residues 264–310, 311–353, 356–403, 405–455, and 457–505; these read HIYL…KHGG, DLYV…SVPG, AIYS…NLNG, IYLL…VHKD, and VFIV…YVFR.

In terms of assembly, component of the BCR(KBTBD4) E3 ubiquitin ligase complex, at least composed of CUL3, KBTBD4 and RBX1.

Substrate-specific adapter of a BCR (BTB-CUL3-RBX1) E3 ubiquitin ligase complex which targets CoREST corepressor complex components RCOR1, KDM1A/LSD1 and HDAC2 for proteasomal degradation. RCOR1 is likely to be the primary target while degradation of KDM1A and HDAC2 is likely due to their association with RCOR1. Also targets RCOR3, MIER2 and MIER3 for proteasomal degradation as well as associated proteins ZNF217 and RREB1. Degradation is dependent on the presence of an ELM2 domain in the target proteins. This chain is Kelch repeat and BTB domain-containing protein 4 (KBTBD4), found in Macaca fascicularis (Crab-eating macaque).